A 43-amino-acid polypeptide reads, in one-letter code: Protein PsbN (43 aa).

A helical membrane pass occupies residues 5–27 (TVFSIFISCLLLSLTGYSLYTAF).

The protein belongs to the PsbN family.

It localises to the plastid. Its subcellular location is the chloroplast thylakoid membrane. Functionally, may play a role in photosystem I and II biogenesis. The protein is Protein PsbN of Chlorokybus atmophyticus (Soil alga).